A 438-amino-acid chain; its full sequence is 5-methylthioadenosine/S-adenosylhomocysteine deaminase (438 aa).

Zn(2+) is bound by residues His-66 and His-68. Positions 95, 148, and 188 each coordinate substrate. His-215 lines the Zn(2+) pocket. Residues Glu-218 and Asp-305 each contribute to the substrate site. A Zn(2+)-binding site is contributed by Asp-305.

This sequence belongs to the metallo-dependent hydrolases superfamily. MTA/SAH deaminase family. The cofactor is Zn(2+).

It catalyses the reaction S-adenosyl-L-homocysteine + H2O + H(+) = S-inosyl-L-homocysteine + NH4(+). The catalysed reaction is S-methyl-5'-thioadenosine + H2O + H(+) = S-methyl-5'-thioinosine + NH4(+). Catalyzes the deamination of 5-methylthioadenosine and S-adenosyl-L-homocysteine into 5-methylthioinosine and S-inosyl-L-homocysteine, respectively. Is also able to deaminate adenosine. This chain is 5-methylthioadenosine/S-adenosylhomocysteine deaminase, found in Halalkalibacterium halodurans (strain ATCC BAA-125 / DSM 18197 / FERM 7344 / JCM 9153 / C-125) (Bacillus halodurans).